Here is a 58-residue protein sequence, read N- to C-terminus: uncharacterized protein (58 aa).

The protein resides in the plastid. It localises to the chloroplast. This is an uncharacterized protein from Chlamydomonas reinhardtii (Chlamydomonas smithii).